The primary structure comprises 434 residues: uncharacterized protein (434 aa).

5 helical membrane passes run 27-47 (IFLLFVILVFVPIGFVFQSVI), 64-84 (FYLSSIKSISLLFLLLLFVNW), 244-264 (IILAFYVTQKILIMIILATVL), 289-309 (VPVNVFAMTIAIAIRFVPSLL), and 387-407 (LILTALYFVVIIFLTVKGAVF).

The protein belongs to the CbiQ family.

Its subcellular location is the cell membrane. This is an uncharacterized protein from Mycoplasma pneumoniae (strain ATCC 29342 / M129 / Subtype 1) (Mycoplasmoides pneumoniae).